Here is a 162-residue protein sequence, read N- to C-terminus: SsrA-binding protein (162 aa).

A disordered region spans residues 140 to 162 (EDRRHDIKERETKREMDRAMRRR).

Belongs to the SmpB family.

It localises to the cytoplasm. In terms of biological role, required for rescue of stalled ribosomes mediated by trans-translation. Binds to transfer-messenger RNA (tmRNA), required for stable association of tmRNA with ribosomes. tmRNA and SmpB together mimic tRNA shape, replacing the anticodon stem-loop with SmpB. tmRNA is encoded by the ssrA gene; the 2 termini fold to resemble tRNA(Ala) and it encodes a 'tag peptide', a short internal open reading frame. During trans-translation Ala-aminoacylated tmRNA acts like a tRNA, entering the A-site of stalled ribosomes, displacing the stalled mRNA. The ribosome then switches to translate the ORF on the tmRNA; the nascent peptide is terminated with the 'tag peptide' encoded by the tmRNA and targeted for degradation. The ribosome is freed to recommence translation, which seems to be the essential function of trans-translation. The sequence is that of SsrA-binding protein from Myxococcus xanthus (strain DK1622).